The following is a 197-amino-acid chain: RNA pyrophosphohydrolase (197 aa).

The Nudix hydrolase domain occupies 6–149; it reads GYRPNVGIVI…KRDVYRRAMK (144 aa). The Nudix box motif lies at 38 to 59; that stretch reads GGINEGETPEQAMFRELFEEVG. The interval 170-197 is disordered; it reads ETKKAETGKKQPYYHKYAPQNKKGRKRR.

It belongs to the Nudix hydrolase family. RppH subfamily. Requires a divalent metal cation as cofactor.

Its function is as follows. Accelerates the degradation of transcripts by removing pyrophosphate from the 5'-end of triphosphorylated RNA, leading to a more labile monophosphorylated state that can stimulate subsequent ribonuclease cleavage. This is RNA pyrophosphohydrolase from Actinobacillus succinogenes (strain ATCC 55618 / DSM 22257 / CCUG 43843 / 130Z).